The following is a 187-amino-acid chain: 1,6-anhydro-N-acetylmuramyl-L-alanine amidase AmpD (187 aa).

The N-acetylmuramoyl-L-alanine amidase domain occupies 29–167; it reads SLLVVHNISL…TPDRKTDPGP (139 aa). H34 is a binding site for Zn(2+). Residue E116 is the Proton acceptor of the active site. Zn(2+) contacts are provided by H154 and D164.

Belongs to the N-acetylmuramoyl-L-alanine amidase 2 family. The cofactor is Zn(2+).

The protein resides in the cytoplasm. The catalysed reaction is Hydrolyzes the link between N-acetylmuramoyl residues and L-amino acid residues in certain cell-wall glycopeptides.. Functionally, involved in cell wall peptidoglycan recycling. Specifically cleaves the amide bond between the lactyl group of N-acetylmuramic acid and the alpha-amino group of the L-alanine in degradation products containing an anhydro N-acetylmuramyl moiety. This Salmonella typhimurium (strain LT2 / SGSC1412 / ATCC 700720) protein is 1,6-anhydro-N-acetylmuramyl-L-alanine amidase AmpD (ampD).